The sequence spans 100 residues: Large ribosomal subunit protein uL23 (100 aa).

The protein belongs to the universal ribosomal protein uL23 family. Part of the 50S ribosomal subunit. Contacts protein L29, and trigger factor when it is bound to the ribosome.

In terms of biological role, one of the early assembly proteins it binds 23S rRNA. One of the proteins that surrounds the polypeptide exit tunnel on the outside of the ribosome. Forms the main docking site for trigger factor binding to the ribosome. The sequence is that of Large ribosomal subunit protein uL23 from Prochlorococcus marinus (strain MIT 9215).